Consider the following 100-residue polypeptide: Urease subunit gamma (100 aa).

This sequence belongs to the urease gamma subunit family. As to quaternary structure, heterotrimer of UreA (gamma), UreB (beta) and UreC (alpha) subunits. Three heterotrimers associate to form the active enzyme.

It is found in the cytoplasm. It carries out the reaction urea + 2 H2O + H(+) = hydrogencarbonate + 2 NH4(+). Its pathway is nitrogen metabolism; urea degradation; CO(2) and NH(3) from urea (urease route): step 1/1. In Pseudarthrobacter chlorophenolicus (strain ATCC 700700 / DSM 12829 / CIP 107037 / JCM 12360 / KCTC 9906 / NCIMB 13794 / A6) (Arthrobacter chlorophenolicus), this protein is Urease subunit gamma.